A 736-amino-acid chain; its full sequence is ABC transporter G family member 16 (736 aa).

The ABC transporter domain occupies 88–332 (LDFHDLVPWR…FAGFGNPIPE (245 aa)). 125–132 (GASGSGKS) serves as a coordination point for ATP. Helical transmembrane passes span 410–430 (SVIN…PFWI), 449–469 (LLGM…TVFW), 484–504 (FFAF…PVFL), 525–545 (VLSH…AFAV), 569–589 (ASFW…PHVM), 590–610 (LGYT…GFFI), and 709–729 (LLIT…CLLL). One can recognise an ABC transmembrane type-2 domain in the interval 430–640 (IEIKTLTRRS…PYEAVLQNEF (211 aa)).

Belongs to the ABC transporter superfamily. ABCG family. Eye pigment precursor importer (TC 3.A.1.204) subfamily.

The protein resides in the membrane. The protein is ABC transporter G family member 16 (ABCG16) of Arabidopsis thaliana (Mouse-ear cress).